The sequence spans 101 residues: Small ribosomal subunit protein uS14A (101 aa).

Residues 29-60 (EIIRSPRSTPEQRTAAQNELAHQPRDASAVRV) form a disordered region. Residues 34-45 (PRSTPEQRTAAQ) show a composition bias toward polar residues.

This sequence belongs to the universal ribosomal protein uS14 family. Part of the 30S ribosomal subunit. Contacts proteins S3 and S10.

Its function is as follows. Binds 16S rRNA, required for the assembly of 30S particles and may also be responsible for determining the conformation of the 16S rRNA at the A site. This Mycolicibacterium paratuberculosis (strain ATCC BAA-968 / K-10) (Mycobacterium paratuberculosis) protein is Small ribosomal subunit protein uS14A.